We begin with the raw amino-acid sequence, 418 residues long: UDP-N-acetylglucosamine 1-carboxyvinyltransferase (418 aa).

Phosphoenolpyruvate is bound at residue 22–23 (KN). Residue Arg-93 participates in UDP-N-acetyl-alpha-D-glucosamine binding. Catalysis depends on Cys-117, which acts as the Proton donor. At Cys-117 the chain carries 2-(S-cysteinyl)pyruvic acid O-phosphothioketal. 2 residues coordinate UDP-N-acetyl-alpha-D-glucosamine: Asp-305 and Val-327.

The protein belongs to the EPSP synthase family. MurA subfamily.

Its subcellular location is the cytoplasm. It catalyses the reaction phosphoenolpyruvate + UDP-N-acetyl-alpha-D-glucosamine = UDP-N-acetyl-3-O-(1-carboxyvinyl)-alpha-D-glucosamine + phosphate. It participates in cell wall biogenesis; peptidoglycan biosynthesis. Cell wall formation. Adds enolpyruvyl to UDP-N-acetylglucosamine. The polypeptide is UDP-N-acetylglucosamine 1-carboxyvinyltransferase (Alkalilimnicola ehrlichii (strain ATCC BAA-1101 / DSM 17681 / MLHE-1)).